The sequence spans 136 residues: MDVRQLRSLVTLVEVRFSVSRAAECLHLVQSAVTQHLKQLEAELGTRLFVRHGKRLVGLTEVGEQVLRHACEALRQTGNIVAVGREHLEEERRRIRLGATHTQARYVLPPVIRRFAAAYPAVELQIHQGTPGQLVD.

The region spanning 1–59 (MDVRQLRSLVTLVEVRFSVSRAAECLHLVQSAVTQHLKQLEAELGTRLFVRHGKRLVGL) is the HTH lysR-type domain. The segment at residues 19–38 (VSRAAECLHLVQSAVTQHLK) is a DNA-binding region (H-T-H motif).

The protein belongs to the LysR transcriptional regulatory family.

Its function is as follows. This protein is a positive regulator of gene expression for the cysteine regulon. The chain is HTH-type transcriptional regulator CysB (cysB) from Thiocapsa roseopersicina.